The primary structure comprises 1276 residues: Histone-lysine N-methyltransferase PRDM16 (1276 aa).

A compositionally biased stretch (basic residues) spans Met-1–Leu-10. The disordered stretch occupies residues Met-1–Tyr-68. Residues Ala-82–Lys-211 form the SET domain. The C2H2-type 1; atypical zinc-finger motif lies at Phe-230–Cys-253. 5 C2H2-type zinc fingers span residues His-281–His-303, Tyr-309–His-331, Phe-337–His-360, His-366–His-388, and Phe-394–His-416. The C2H2-type 7; atypical zinc-finger motif lies at Ile-423 to Cys-445. Disordered stretches follow at residues Ser-533–Gly-657 and Pro-772–Asp-804. The span at Ala-561–Thr-570 shows a compositional bias: polar residues. A compositionally biased stretch (basic and acidic residues) spans Pro-575 to Asp-597. The segment covering Thr-609–Asp-624 has biased composition (low complexity). The segment covering Asp-632–Ser-642 has biased composition (basic and acidic residues). An interaction with CTBP1, CTBP2 and ZNF516 region spans residues Asp-679–Ser-1038. A mediates interaction with SKI and regulation of TGF-beta signaling region spans residues Pro-739–Leu-1276. 3 consecutive C2H2-type zinc fingers follow at residues Tyr-951–His-973, Tyr-979–His-1002, and Phe-1008–His-1032. Disordered regions lie at residues Glu-1033–Leu-1065 and Ala-1105–Ala-1163. The span at His-1047–Glu-1058 shows a compositional bias: polar residues. The segment covering Glu-1116–Ser-1133 has biased composition (acidic residues).

Belongs to the PRDM16 family. As to quaternary structure, interacts with CEBPA, CEBPB and CEBPD; the interaction is direct. Interacts with PPARG and PPARA; controls brown adipocytes differentiation. Interacts with CTBP1 and CTBP2; represses the expression of WAT-specific genes. Interacts with PPARGC1A and PPARGC1B; interaction with PPARGC1A or PPARGC1B activates the transcription of BAT-specific gene. Interacts with HDAC1, SKI, SMAD2 and SMAD3; the interaction with SKI promotes the recruitment of SMAD3-HDAC1 complex on the promoter of TGF-beta target genes. Interacts with ZNF516; the interaction is direct and may play a role in the transcription of brown adipose tissue-specific gene. As to expression, expressed in uterus and kidney. Expressed in both cardiomyocytes and interstitial cells.

The protein resides in the nucleus. It localises to the cytoplasm. It catalyses the reaction L-lysyl(9)-[histone H3] + S-adenosyl-L-methionine = N(6)-methyl-L-lysyl(9)-[histone H3] + S-adenosyl-L-homocysteine + H(+). Binds DNA and functions as a transcriptional regulator. Displays histone methyltransferase activity and monomethylates 'Lys-9' of histone H3 (H3K9me1) in vitro. Probably catalyzes the monomethylation of free histone H3 in the cytoplasm which is then transported to the nucleus and incorporated into nucleosomes where SUV39H methyltransferases use it as a substrate to catalyze histone H3 'Lys-9' trimethylation. Likely to be one of the primary histone methyltransferases along with MECOM/PRDM3 that direct cytoplasmic H3K9me1 methylation. Functions in the differentiation of brown adipose tissue (BAT) which is specialized in dissipating chemical energy in the form of heat in response to cold or excess feeding while white adipose tissue (WAT) is specialized in the storage of excess energy and the control of systemic metabolism. Together with CEBPB, regulates the differentiation of myoblastic precursors into brown adipose cells. Functions as a repressor of TGF-beta signaling. Functionally, binds DNA and functions as a transcriptional regulator. Functions as a repressor of TGF-beta signaling. May regulate granulocyte differentiation. This chain is Histone-lysine N-methyltransferase PRDM16, found in Homo sapiens (Human).